We begin with the raw amino-acid sequence, 487 residues long: ATP synthase subunit beta (487 aa).

164–171 (GGAGVGKT) lines the ATP pocket.

It belongs to the ATPase alpha/beta chains family. F-type ATPases have 2 components, CF(1) - the catalytic core - and CF(0) - the membrane proton channel. CF(1) has five subunits: alpha(3), beta(3), gamma(1), delta(1), epsilon(1). CF(0) has four main subunits: a(1), b(1), b'(1) and c(9-12).

The protein localises to the cellular thylakoid membrane. The enzyme catalyses ATP + H2O + 4 H(+)(in) = ADP + phosphate + 5 H(+)(out). Functionally, produces ATP from ADP in the presence of a proton gradient across the membrane. The catalytic sites are hosted primarily by the beta subunits. This chain is ATP synthase subunit beta, found in Synechococcus sp. (strain WH7803).